A 166-amino-acid chain; its full sequence is Ubiquitin-conjugating enzyme E2 7 (166 aa).

Alanine 2 is subject to N-acetylalanine. The UBC core domain occupies 4-164 (QASLLLQKQL…VSRCVRKSQE (161 aa)). Cysteine 89 functions as the Glycyl thioester intermediate in the catalytic mechanism.

It belongs to the ubiquitin-conjugating enzyme family.

The catalysed reaction is S-ubiquitinyl-[E1 ubiquitin-activating enzyme]-L-cysteine + [E2 ubiquitin-conjugating enzyme]-L-cysteine = [E1 ubiquitin-activating enzyme]-L-cysteine + S-ubiquitinyl-[E2 ubiquitin-conjugating enzyme]-L-cysteine.. The protein operates within protein modification; protein ubiquitination. Functionally, accepts the ubiquitin from the E1 complex and catalyzes its covalent attachment to other proteins. Involved in the formation of multiubiquitin chains. Signal the protein for selective degradation. The polypeptide is Ubiquitin-conjugating enzyme E2 7 (UBC7) (Arabidopsis thaliana (Mouse-ear cress)).